The following is a 277-amino-acid chain: Bifunctional protein FolD (277 aa).

NADP(+)-binding positions include 159–161, Ser-184, and Ile-225; that span reads GRS.

The protein belongs to the tetrahydrofolate dehydrogenase/cyclohydrolase family. In terms of assembly, homodimer.

The catalysed reaction is (6R)-5,10-methylene-5,6,7,8-tetrahydrofolate + NADP(+) = (6R)-5,10-methenyltetrahydrofolate + NADPH. The enzyme catalyses (6R)-5,10-methenyltetrahydrofolate + H2O = (6R)-10-formyltetrahydrofolate + H(+). It functions in the pathway one-carbon metabolism; tetrahydrofolate interconversion. Functionally, catalyzes the oxidation of 5,10-methylenetetrahydrofolate to 5,10-methenyltetrahydrofolate and then the hydrolysis of 5,10-methenyltetrahydrofolate to 10-formyltetrahydrofolate. The sequence is that of Bifunctional protein FolD from Acholeplasma laidlawii (strain PG-8A).